The following is a 174-amino-acid chain: Actin-related protein 2/3 complex subunit 3 (174 aa).

This sequence belongs to the ARPC3 family. In terms of assembly, component of the Arp2/3 complex composed of arp2, act2, arc1/p41-ARC, arc2/p34-ARC, arc3/p21-ARC, arc4/p20-ARC and arc5/p16-ARC.

The protein resides in the cytoplasm. Its subcellular location is the cytoskeleton. It is found in the actin patch. In terms of biological role, functions as a component of the Arp2/3 complex which is involved in regulation of actin polymerization and together with an activating nucleation-promoting factor (NPF) mediates the formation of branched actin networks. The polypeptide is Actin-related protein 2/3 complex subunit 3 (arc3) (Schizosaccharomyces pombe (strain 972 / ATCC 24843) (Fission yeast)).